The sequence spans 194 residues: ATP synthase subunit delta (194 aa).

The protein belongs to the ATPase delta chain family. F-type ATPases have 2 components, F(1) - the catalytic core - and F(0) - the membrane proton channel. F(1) has five subunits: alpha(3), beta(3), gamma(1), delta(1), epsilon(1). F(0) has three main subunits: a(1), b(2) and c(10-14). The alpha and beta chains form an alternating ring which encloses part of the gamma chain. F(1) is attached to F(0) by a central stalk formed by the gamma and epsilon chains, while a peripheral stalk is formed by the delta and b chains.

It localises to the cell inner membrane. Its function is as follows. F(1)F(0) ATP synthase produces ATP from ADP in the presence of a proton or sodium gradient. F-type ATPases consist of two structural domains, F(1) containing the extramembraneous catalytic core and F(0) containing the membrane proton channel, linked together by a central stalk and a peripheral stalk. During catalysis, ATP synthesis in the catalytic domain of F(1) is coupled via a rotary mechanism of the central stalk subunits to proton translocation. In terms of biological role, this protein is part of the stalk that links CF(0) to CF(1). It either transmits conformational changes from CF(0) to CF(1) or is implicated in proton conduction. This Bartonella quintana (strain Toulouse) (Rochalimaea quintana) protein is ATP synthase subunit delta.